Reading from the N-terminus, the 604-residue chain is Kelch-like protein 15 (604 aa).

The BTB domain maps to 31 to 98; sequence LDVTLVIEDH…MYYGTIELSM (68 aa). Residues 133-237 enclose the BACK domain; that stretch reads CAEIMRLLDD…TPSSVFEKVK (105 aa). Kelch repeat units follow at residues 328–379, 381–426, 428–473, 489–542, and 544–590; these read FVFL…VIGK, IYAV…VLNN, LFIT…NKSK, KLYV…VLDK, and IMVL…VCNL.

Homodimer. Dimerization does not affect PPP2R5B-binding, but is required for its proteasomal degradation. Interacts with CUL3. Directly interacts with PPP2R5B; this interaction leads to PPP2R5B proteasomal degradation. Interacts with RBBP8/CtIP; this interaction leads to RBBP8 proteasomal degradation. Interacts with PACMP micropeptide; interaction prevents ubiquitination and degradation of RBBP8/CtIP.

It is found in the nucleus. The protein operates within protein modification; protein ubiquitination. In terms of biological role, substrate-specific adapter for CUL3 E3 ubiquitin-protein ligase complex. Acts as an adapter for CUL3 to target the serine/threonine-protein phosphatase 2A (PP2A) subunit PPP2R5B for ubiquitination and subsequent proteasomal degradation, thus promoting exchange with other regulatory subunits and regulating PP2A holoenzyme composition. Acts as an adapter for CUL3 to target the DNA-end resection factor RBBP8/CtIP for ubiquitination and subsequent proteasomal degradation. Through the regulation of RBBP8/CtIP protein turnover, plays a key role in DNA damage response, favoring DNA double-strand repair through error-prone non-homologous end joining (NHEJ) over error-free, RBBP8-mediated homologous recombination (HR). This is Kelch-like protein 15 (Klhl15) from Mus musculus (Mouse).